Consider the following 434-residue polypeptide: Trigger factor (434 aa).

Positions 163–248 (GDTAVIDFAG…VHDIKRKELP (86 aa)) constitute a PPIase FKBP-type domain.

It belongs to the FKBP-type PPIase family. Tig subfamily.

It is found in the cytoplasm. It carries out the reaction [protein]-peptidylproline (omega=180) = [protein]-peptidylproline (omega=0). Its function is as follows. Involved in protein export. Acts as a chaperone by maintaining the newly synthesized protein in an open conformation. Functions as a peptidyl-prolyl cis-trans isomerase. The polypeptide is Trigger factor (Shouchella clausii (strain KSM-K16) (Alkalihalobacillus clausii)).